The sequence spans 352 residues: Fe(3+) ions import ATP-binding protein FbpC 1 (352 aa).

In terms of domain architecture, ABC transporter spans 11–241 (VELKHITKRF…PASRFMASFM (231 aa)). 43–50 (GPSGCGKT) contacts ATP.

This sequence belongs to the ABC transporter superfamily. Fe(3+) ion importer (TC 3.A.1.10) family. The complex is composed of two ATP-binding proteins (FbpC), two transmembrane proteins (FbpB) and a solute-binding protein (FbpA).

The protein localises to the cell inner membrane. The enzyme catalyses Fe(3+)(out) + ATP + H2O = Fe(3+)(in) + ADP + phosphate + H(+). Functionally, part of the ABC transporter complex FbpABC involved in Fe(3+) ions import. Responsible for energy coupling to the transport system. The chain is Fe(3+) ions import ATP-binding protein FbpC 1 from Pectobacterium atrosepticum (strain SCRI 1043 / ATCC BAA-672) (Erwinia carotovora subsp. atroseptica).